Consider the following 118-residue polypeptide: Co-chaperonin GroES (118 aa).

Belongs to the GroES chaperonin family. In terms of assembly, heptamer of 7 subunits arranged in a ring. Interacts with the chaperonin GroEL.

The protein localises to the cytoplasm. Together with the chaperonin GroEL, plays an essential role in assisting protein folding. The GroEL-GroES system forms a nano-cage that allows encapsulation of the non-native substrate proteins and provides a physical environment optimized to promote and accelerate protein folding. GroES binds to the apical surface of the GroEL ring, thereby capping the opening of the GroEL channel. The polypeptide is Co-chaperonin GroES (Helicobacter pylori (strain Shi470)).